The sequence spans 87 residues: Small ribosomal subunit protein uS15 (87 aa).

The protein belongs to the universal ribosomal protein uS15 family. Part of the 30S ribosomal subunit. Forms a bridge to the 50S subunit in the 70S ribosome, contacting the 23S rRNA.

Its function is as follows. One of the primary rRNA binding proteins, it binds directly to 16S rRNA where it helps nucleate assembly of the platform of the 30S subunit by binding and bridging several RNA helices of the 16S rRNA. Functionally, forms an intersubunit bridge (bridge B4) with the 23S rRNA of the 50S subunit in the ribosome. The chain is Small ribosomal subunit protein uS15 from Clostridium perfringens (strain ATCC 13124 / DSM 756 / JCM 1290 / NCIMB 6125 / NCTC 8237 / Type A).